A 349-amino-acid polypeptide reads, in one-letter code: Protein FAM98C (349 aa).

The tract at residues 313–349 (PDRGGRPNELEPPMPTWRSRREDGGPQCWGRKKKKKK) is disordered.

This sequence belongs to the FAM98 family.

This Homo sapiens (Human) protein is Protein FAM98C (FAM98C).